A 1449-amino-acid polypeptide reads, in one-letter code: Gag-Pol polyprotein (1449 aa).

G2 carries N-myristoyl glycine; by host lipidation. The interaction with Gp41 stretch occupies residues 7 to 31 (VLTGGKLDQWEAIYLRPGGKKKYRL). Residues 8 to 43 (LTGGKLDQWEAIYLRPGGKKKYRLKHLVWASRELER) form an interaction with host CALM1 region. Residues 12 to 19 (KLDQWEAI) are interaction with host AP3D1. An interaction with membrane phosphatidylinositol 4,5-bisphosphate and RNA region spans residues 14–33 (DQWEAIYLRPGGKKKYRLKH). The Nuclear export signal motif lies at 16–22 (WEAIYLR). Positions 26-32 (KKKYRLK) match the Nuclear localization signal motif. Residues 73–77 (EGLRS) are interaction with membrane phosphatidylinositol 4,5-bisphosphate. The span at 105-119 (KEKQEQHKSEPKKPE) shows a compositional bias: basic and acidic residues. The segment at 105 to 128 (KEKQEQHKSEPKKPEAGTAAAADS) is disordered. Phosphotyrosine; by host is present on Y134. The tract at residues 191-229 (NTVGGHQAAMQMLKEVINEEAAEWDRTHPAPVGPLPPGQ) is interaction with human PPIA/CYPA and NUP153. The dimerization/Multimerization of capsid protein p24 stretch occupies residues 279-365 (YSPVSILEIK…GGPAHKARVL (87 aa)). 2 CCHC-type zinc fingers span residues 392 to 409 (IKCFNCGKEGHLARNCKA) and 413 to 430 (RGCWKCGQEGHQMKDCKN). The disordered stretch occupies residues 445 to 492 (QRETRKLPPDNNKERAHSPATRELWVSGGEEHTGKGDAGEPGEDRDLS). Basic and acidic residues-rich tracts occupy residues 446–461 (RETRKLPPDNNKERAH) and 473–491 (GEEHTGKGDAGEPGEDRDL). Positions 499–503 (PQITL) are dimerization of protease. One can recognise a Peptidase A2 domain in the interval 518-587 (REALLDTGAD…TPVNIIGRNF (70 aa)). The active-site For protease activity; shared with dimeric partner is D523. 2 dimerization of protease regions span residues 547–553 (GIGGFIK) and 586–598 (NFLTQIGCTLNFP). Positions 641–831 (EGKISRIGPE…PPFLWMGYEL (191 aa)) constitute a Reverse transcriptase domain. Mg(2+) is bound by residues D707, D782, and D783. An RT 'primer grip' region spans residues 824-832 (FLWMGYELH). The Tryptophan repeat motif signature appears at 995 to 1011 (WETWWTEHWQATWIPEW). The RNase H type-1 domain occupies 1031–1154 (ISGAETYYVD…VDXLVSSGIR (124 aa)). 4 residues coordinate Mg(2+): D1040, E1075, D1095, and D1146. The Integrase-type zinc-finger motif lies at 1160 to 1201 (DGIEKAQEEHERYHSNWKAMASDFNLPPIVAKEIVASCDKCQ). Zn(2+)-binding residues include H1169, H1173, C1197, and C1200. In terms of domain architecture, Integrase catalytic spans 1211-1361 (INCSPGVWQL…TAGERIIDII (151 aa)). The Mg(2+) site is built by D1221, D1273, and E1309. The integrase-type DNA-binding region spans 1380–1427 (FXVYYRDSRDPIWKGPAKLLWKGEGAVVIQDNGDIKVVPRRKAKIIRD).

Homotrimer; further assembles as hexamers of trimers. Interacts with gp41 (via C-terminus). Interacts with host CALM1; this interaction induces a conformational change in the Matrix protein, triggering exposure of the myristate group. Interacts with host AP3D1; this interaction allows the polyprotein trafficking to multivesicular bodies during virus assembly. Part of the pre-integration complex (PIC) which is composed of viral genome, matrix protein, Vpr and integrase. As to quaternary structure, homodimer; the homodimer further multimerizes as homohexamers or homopentamers. Interacts with human PPIA/CYPA; This interaction stabilizes the capsid. Interacts with human NUP153. Interacts with host PDZD8; this interaction stabilizes the capsid. Interacts with monkey TRIM5; this interaction destabilizes the capsid. In terms of assembly, homodimer, whose active site consists of two apposed aspartic acid residues. Heterodimer of p66 RT and p51 RT (RT p66/p51). Heterodimerization of RT is essential for DNA polymerase activity. The overall folding of the subdomains is similar in p66 RT and p51 RT but the spatial arrangements of the subdomains are dramatically different. As to quaternary structure, homotetramer; may further associate as a homohexadecamer. Part of the pre-integration complex (PIC) which is composed of viral genome, matrix protein, Vpr and integrase. Interacts with human SMARCB1/INI1 and human PSIP1/LEDGF isoform 1. Interacts with human KPNA3; this interaction might play a role in nuclear import of the pre-integration complex. Interacts with human NUP153; this interaction might play a role in nuclear import of the pre-integration complex. It depends on Mg(2+) as a cofactor. Specific enzymatic cleavages by the viral protease yield mature proteins. The protease is released by autocatalytic cleavage. The polyprotein is cleaved during and after budding, this process is termed maturation. Proteolytic cleavage of p66 RT removes the RNase H domain to yield the p51 RT subunit. Nucleocapsid protein p7 might be further cleaved after virus entry. In terms of processing, tyrosine phosphorylated presumably in the virion by a host kinase. Phosphorylation is apparently not a major regulator of membrane association. Post-translationally, phosphorylated possibly by host MAPK1; this phosphorylation is necessary for Pin1-mediated virion uncoating. Methylated by host PRMT6, impairing its function by reducing RNA annealing and the initiation of reverse transcription.

The protein localises to the host cell membrane. The protein resides in the host endosome. It localises to the host multivesicular body. It is found in the virion membrane. Its subcellular location is the host nucleus. The protein localises to the host cytoplasm. The protein resides in the virion. It carries out the reaction Specific for a P1 residue that is hydrophobic, and P1' variable, but often Pro.. It catalyses the reaction Endohydrolysis of RNA in RNA/DNA hybrids. Three different cleavage modes: 1. sequence-specific internal cleavage of RNA. Human immunodeficiency virus type 1 and Moloney murine leukemia virus enzymes prefer to cleave the RNA strand one nucleotide away from the RNA-DNA junction. 2. RNA 5'-end directed cleavage 13-19 nucleotides from the RNA end. 3. DNA 3'-end directed cleavage 15-20 nucleotides away from the primer terminus.. The enzyme catalyses 3'-end directed exonucleolytic cleavage of viral RNA-DNA hybrid.. The catalysed reaction is DNA(n) + a 2'-deoxyribonucleoside 5'-triphosphate = DNA(n+1) + diphosphate. With respect to regulation, protease: The viral protease is inhibited by many synthetic protease inhibitors (PIs), such as amprenavir, atazanavir, indinavir, loprinavir, nelfinavir, ritonavir and saquinavir. Use of protease inhibitors in tritherapy regimens permit more ambitious therapeutic strategies. Reverse transcriptase/ribonuclease H: RT can be inhibited either by nucleoside RT inhibitors (NRTIs) or by non nucleoside RT inhibitors (NNRTIs). NRTIs act as chain terminators, whereas NNRTIs inhibit DNA polymerization by binding a small hydrophobic pocket near the RT active site and inducing an allosteric change in this region. Classical NRTIs are abacavir, adefovir (PMEA), didanosine (ddI), lamivudine (3TC), stavudine (d4T), tenofovir (PMPA), zalcitabine (ddC), and zidovudine (AZT). Classical NNRTIs are atevirdine (BHAP U-87201E), delavirdine, efavirenz (DMP-266), emivirine (I-EBU), and nevirapine (BI-RG-587). The tritherapies used as a basic effective treatment of AIDS associate two NRTIs and one NNRTI. In terms of biological role, mediates, with Gag polyprotein, the essential events in virion assembly, including binding the plasma membrane, making the protein-protein interactions necessary to create spherical particles, recruiting the viral Env proteins, and packaging the genomic RNA via direct interactions with the RNA packaging sequence (Psi). Gag-Pol polyprotein may regulate its own translation, by the binding genomic RNA in the 5'-UTR. At low concentration, the polyprotein would promote translation, whereas at high concentration, the polyprotein would encapsidate genomic RNA and then shut off translation. Its function is as follows. Targets the polyprotein to the plasma membrane via a multipartite membrane-binding signal, that includes its myristoylated N-terminus. Matrix protein is part of the pre-integration complex. Implicated in the release from host cell mediated by Vpu. Binds to RNA. Functionally, forms the conical core that encapsulates the genomic RNA-nucleocapsid complex in the virion. Most core are conical, with only 7% tubular. The core is constituted by capsid protein hexamer subunits. The core is disassembled soon after virion entry. Host restriction factors such as TRIM5-alpha or TRIMCyp bind retroviral capsids and cause premature capsid disassembly, leading to blocks in reverse transcription. Capsid restriction by TRIM5 is one of the factors which restricts HIV-1 to the human species. Host PIN1 apparently facilitates the virion uncoating. On the other hand, interactions with PDZD8 or CYPA stabilize the capsid. Encapsulates and protects viral dimeric unspliced genomic RNA (gRNA). Binds these RNAs through its zinc fingers. Acts as a nucleic acid chaperone which is involved in rearangement of nucleic acid secondary structure during gRNA retrotranscription. Also facilitates template switch leading to recombination. As part of the polyprotein, participates in gRNA dimerization, packaging, tRNA incorporation and virion assembly. In terms of biological role, aspartyl protease that mediates proteolytic cleavages of Gag and Gag-Pol polyproteins during or shortly after the release of the virion from the plasma membrane. Cleavages take place as an ordered, step-wise cascade to yield mature proteins. This process is called maturation. Displays maximal activity during the budding process just prior to particle release from the cell. Also cleaves Nef and Vif, probably concomitantly with viral structural proteins on maturation of virus particles. Hydrolyzes host EIF4GI and PABP1 in order to shut off the capped cellular mRNA translation. The resulting inhibition of cellular protein synthesis serves to ensure maximal viral gene expression and to evade host immune response. Also mediates cleavage of host YTHDF3. Mediates cleavage of host CARD8, thereby activating the CARD8 inflammasome, leading to the clearance of latent HIV-1 in patient CD4(+) T-cells after viral reactivation; in contrast, HIV-1 can evade CARD8-sensing when its protease remains inactive in infected cells prior to viral budding. Its function is as follows. Multifunctional enzyme that converts the viral RNA genome into dsDNA in the cytoplasm, shortly after virus entry into the cell. This enzyme displays a DNA polymerase activity that can copy either DNA or RNA templates, and a ribonuclease H (RNase H) activity that cleaves the RNA strand of RNA-DNA heteroduplexes in a partially processive 3' to 5' endonucleasic mode. Conversion of viral genomic RNA into dsDNA requires many steps. A tRNA(3)-Lys binds to the primer-binding site (PBS) situated at the 5'-end of the viral RNA. RT uses the 3' end of the tRNA primer to perform a short round of RNA-dependent minus-strand DNA synthesis. The reading proceeds through the U5 region and ends after the repeated (R) region which is present at both ends of viral RNA. The portion of the RNA-DNA heteroduplex is digested by the RNase H, resulting in a ssDNA product attached to the tRNA primer. This ssDNA/tRNA hybridizes with the identical R region situated at the 3' end of viral RNA. This template exchange, known as minus-strand DNA strong stop transfer, can be either intra- or intermolecular. RT uses the 3' end of this newly synthesized short ssDNA to perform the RNA-dependent minus-strand DNA synthesis of the whole template. RNase H digests the RNA template except for two polypurine tracts (PPTs) situated at the 5'-end and near the center of the genome. It is not clear if both polymerase and RNase H activities are simultaneous. RNase H probably can proceed both in a polymerase-dependent (RNA cut into small fragments by the same RT performing DNA synthesis) and a polymerase-independent mode (cleavage of remaining RNA fragments by free RTs). Secondly, RT performs DNA-directed plus-strand DNA synthesis using the PPTs that have not been removed by RNase H as primers. PPTs and tRNA primers are then removed by RNase H. The 3' and 5' ssDNA PBS regions hybridize to form a circular dsDNA intermediate. Strand displacement synthesis by RT to the PBS and PPT ends produces a blunt ended, linear dsDNA copy of the viral genome that includes long terminal repeats (LTRs) at both ends. Functionally, catalyzes viral DNA integration into the host chromosome, by performing a series of DNA cutting and joining reactions. This enzyme activity takes place after virion entry into a cell and reverse transcription of the RNA genome in dsDNA. The first step in the integration process is 3' processing. This step requires a complex comprising the viral genome, matrix protein, Vpr and integrase. This complex is called the pre-integration complex (PIC). The integrase protein removes 2 nucleotides from each 3' end of the viral DNA, leaving recessed CA OH's at the 3' ends. In the second step, the PIC enters cell nucleus. This process is mediated through integrase and Vpr proteins, and allows the virus to infect a non dividing cell. This ability to enter the nucleus is specific of lentiviruses, other retroviruses cannot and rely on cell division to access cell chromosomes. In the third step, termed strand transfer, the integrase protein joins the previously processed 3' ends to the 5' ends of strands of target cellular DNA at the site of integration. The 5'-ends are produced by integrase-catalyzed staggered cuts, 5 bp apart. A Y-shaped, gapped, recombination intermediate results, with the 5'-ends of the viral DNA strands and the 3' ends of target DNA strands remaining unjoined, flanking a gap of 5 bp. The last step is viral DNA integration into host chromosome. This involves host DNA repair synthesis in which the 5 bp gaps between the unjoined strands are filled in and then ligated. Since this process occurs at both cuts flanking the HIV genome, a 5 bp duplication of host DNA is produced at the ends of HIV-1 integration. Alternatively, Integrase may catalyze the excision of viral DNA just after strand transfer, this is termed disintegration. The sequence is that of Gag-Pol polyprotein (gag-pol) from Human immunodeficiency virus type 1 group N (isolate YBF106) (HIV-1).